The sequence spans 166 residues: Endoribonuclease YbeY (166 aa).

Positions 129, 133, and 139 each coordinate Zn(2+).

This sequence belongs to the endoribonuclease YbeY family. Zn(2+) is required as a cofactor.

The protein localises to the cytoplasm. Its function is as follows. Single strand-specific metallo-endoribonuclease involved in late-stage 70S ribosome quality control and in maturation of the 3' terminus of the 16S rRNA. The chain is Endoribonuclease YbeY from Mesorhizobium japonicum (strain LMG 29417 / CECT 9101 / MAFF 303099) (Mesorhizobium loti (strain MAFF 303099)).